Consider the following 80-residue polypeptide: Large ribosomal subunit protein eL38 (80 aa).

Belongs to the eukaryotic ribosomal protein eL38 family. As to quaternary structure, component of the large ribosomal subunit (LSU). Mature N.crassa ribosomes consist of a small (40S) and a large (60S) subunit. The 40S small subunit contains 1 molecule of ribosomal RNA (18S rRNA) and at least 32 different proteins. The large 60S subunit contains 3 rRNA molecules (26S, 5.8S and 5S rRNA) and at least 42 different proteins.

The protein resides in the cytoplasm. In terms of biological role, component of the ribosome, a large ribonucleoprotein complex responsible for the synthesis of proteins in the cell. The small ribosomal subunit (SSU) binds messenger RNAs (mRNAs) and translates the encoded message by selecting cognate aminoacyl-transfer RNA (tRNA) molecules. The large subunit (LSU) contains the ribosomal catalytic site termed the peptidyl transferase center (PTC), which catalyzes the formation of peptide bonds, thereby polymerizing the amino acids delivered by tRNAs into a polypeptide chain. The nascent polypeptides leave the ribosome through a tunnel in the LSU and interact with protein factors that function in enzymatic processing, targeting, and the membrane insertion of nascent chains at the exit of the ribosomal tunnel. In Neurospora crassa (strain ATCC 24698 / 74-OR23-1A / CBS 708.71 / DSM 1257 / FGSC 987), this protein is Large ribosomal subunit protein eL38 (rpl-38).